The sequence spans 70 residues: DNA gyrase inhibitor YacG (70 aa).

Zn(2+) is bound by residues Cys20, Cys23, Cys35, and Cys39.

Belongs to the DNA gyrase inhibitor YacG family. Interacts with GyrB. Requires Zn(2+) as cofactor.

In terms of biological role, inhibits all the catalytic activities of DNA gyrase by preventing its interaction with DNA. Acts by binding directly to the C-terminal domain of GyrB, which probably disrupts DNA binding by the gyrase. The chain is DNA gyrase inhibitor YacG from Rhizobium etli (strain ATCC 51251 / DSM 11541 / JCM 21823 / NBRC 15573 / CFN 42).